The sequence spans 142 residues: Crustacean hyperglycemic hormones (142 aa).

The first 26 residues, 1–26, serve as a signal peptide directing secretion; sequence MYSKTIPAMLAIITVAYLCALPHAHA. Pyrrolidone carboxylic acid; partial is present on Q67. 3 disulfides stabilise this stretch: C73-C109, C89-C105, and C92-C118. V138 is modified (valine amide).

Belongs to the arthropod CHH/MIH/GIH/VIH hormone family. Post-translationally, the N-terminus is blocked only in isoform CHH-II but not in isoform CHH-I. Produced by the medulla terminalis X-organ in the eyestalks and transported to the sinus gland where they are stored and released.

The protein resides in the secreted. Hormone found in the sinus gland of isopods and decapods which controls the blood sugar level. Has a secretagogue action over the amylase released from the midgut gland. May act as a stress hormone and may be involved in the control of molting and reproduction. The protein is Crustacean hyperglycemic hormones of Carcinus maenas (Common shore crab).